The chain runs to 448 residues: UDP-N-acetylmuramoylalanine--D-glutamate ligase (448 aa).

Residue 112–118 coordinates ATP; sequence GSNAKST.

The protein belongs to the MurCDEF family.

Its subcellular location is the cytoplasm. The catalysed reaction is UDP-N-acetyl-alpha-D-muramoyl-L-alanine + D-glutamate + ATP = UDP-N-acetyl-alpha-D-muramoyl-L-alanyl-D-glutamate + ADP + phosphate + H(+). It participates in cell wall biogenesis; peptidoglycan biosynthesis. In terms of biological role, cell wall formation. Catalyzes the addition of glutamate to the nucleotide precursor UDP-N-acetylmuramoyl-L-alanine (UMA). In Acinetobacter baumannii (strain AB307-0294), this protein is UDP-N-acetylmuramoylalanine--D-glutamate ligase.